The following is a 91-amino-acid chain: Large ribosomal subunit protein uL23c (91 aa).

This sequence belongs to the universal ribosomal protein uL23 family. Part of the 50S ribosomal subunit.

Its subcellular location is the plastid. The protein resides in the chloroplast. Binds to 23S rRNA. The sequence is that of Large ribosomal subunit protein uL23c (rpl23) from Pinus thunbergii (Japanese black pine).